Consider the following 214-residue polypeptide: MQFSLSIATAILAATASAMPVLETRQTVGTTANEFTSGGCKDVVLLYARGTTQAGNMGQEPGPELGNALKARLGAARVAVQGVAYSASLLGNLNPGGAPANEATSFRTLIGQVASQCPNARIVVSGYSQGAALVHRAVEGATAAVRARIAAGVTFGDTQKQQDGGRIPGLDASKTLIICNTGDRVCEGTLIITAAHSGYGARAGEAVDFIAARV.

A signal peptide spans 1-18; the sequence is MQFSLSIATAILAATASA. The cysteines at positions 40 and 117 are disulfide-linked. Serine 128 functions as the Nucleophile in the catalytic mechanism. A disulfide bridge links cysteine 179 with cysteine 186. Residue aspartate 183 is part of the active site. The active-site Proton donor/acceptor is the histidine 196.

Belongs to the cutinase family. In terms of processing, the 2 disulfide bonds play a critical role in holding the catalytic residues in juxta-position; reduction of the disulfide bridges results in the complete inactivation of the enzyme.

The protein resides in the secreted. The enzyme catalyses cutin + H2O = cutin monomers.. Catalyzes the hydrolysis of complex carboxylic polyesters found in the cell wall of plants. Degrades cutin, a macromolecule that forms the structure of the plant cuticle. Required for efficient penetration of the host plant cuticle by the appressorium during the initial stage of fungal infection. This Pyricularia oryzae (strain 70-15 / ATCC MYA-4617 / FGSC 8958) (Rice blast fungus) protein is Cutinase CUT2.